We begin with the raw amino-acid sequence, 493 residues long: Proline--tRNA ligase (493 aa).

This sequence belongs to the class-II aminoacyl-tRNA synthetase family. ProS type 3 subfamily. In terms of assembly, homodimer.

It is found in the cytoplasm. The catalysed reaction is tRNA(Pro) + L-proline + ATP = L-prolyl-tRNA(Pro) + AMP + diphosphate. Its function is as follows. Catalyzes the attachment of proline to tRNA(Pro) in a two-step reaction: proline is first activated by ATP to form Pro-AMP and then transferred to the acceptor end of tRNA(Pro). This chain is Proline--tRNA ligase, found in Porphyromonas gingivalis (strain ATCC BAA-308 / W83).